The sequence spans 1798 residues: Laminin subunit beta-2 (1798 aa).

Positions 1 to 32 (MELTSRERGRGQPLPWELRLGLLLSVLAATLA) are cleaved as a signal peptide. In terms of domain architecture, Laminin N-terminal spans 43–282 (SRGSCYPATG…ALYELVVRGN (240 aa)). Residue Asn248 is glycosylated (N-linked (GlcNAc...) asparagine). 19 disulfide bridges follow: Cys283/Cys292, Cys285/Cys310, Cys312/Cys321, Cys324/Cys344, Cys347/Cys356, Cys349/Cys374, Cys377/Cys386, Cys389/Cys407, Cys410/Cys423, Cys412/Cys438, Cys440/Cys449, Cys452/Cys467, Cys470/Cys484, Cys472/Cys491, Cys493/Cys502, Cys505/Cys519, Cys522/Cys534, Cys524/Cys541, and Cys543/Cys552. Laminin EGF-like domains are found at residues 283–346 (CFCY…ACRK), 347–409 (CECH…VCRS), 410–469 (CDCD…GCRR), and 470–521 (CQCN…GCRP). The N-linked (GlcNAc...) asparagine glycan is linked to Asn368. A Laminin EGF-like 5; truncated domain is found at 522–552 (CDCDVGGALDPQCDEGTGQCHCRQHMVGRRC). A Laminin IV type B domain is found at 561 to 777 (RPFLDHLIWE…LLISLSTLIY (217 aa)). 32 disulfides stabilise this stretch: Cys783-Cys795, Cys785-Cys802, Cys804-Cys813, Cys816-Cys828, Cys831-Cys843, Cys833-Cys850, Cys852-Cys861, Cys864-Cys874, Cys877-Cys886, Cys879-Cys893, Cys896-Cys905, Cys908-Cys924, Cys927-Cys943, Cys929-Cys954, Cys956-Cys965, Cys968-Cys983, Cys986-Cys1000, Cys988-Cys1007, Cys1010-Cys1019, Cys1022-Cys1035, Cys1038-Cys1058, Cys1040-Cys1065, Cys1067-Cys1076, Cys1079-Cys1092, Cys1095-Cys1107, Cys1097-Cys1114, Cys1116-Cys1125, Cys1128-Cys1140, Cys1143-Cys1155, Cys1145-Cys1162, Cys1164-Cys1173, and Cys1176-Cys1187. 8 consecutive Laminin EGF-like domains span residues 783-830 (CQCN…GCQA), 831-876 (CQCS…SCRP), 877-926 (CVCN…QCRP), 927-985 (CPCP…RCQL), 986-1037 (CECS…SCHR), 1038-1094 (CTCN…GCQP), 1095-1142 (CACH…QCHA), and 1143-1189 (CDCD…ACHP). A glycan (N-linked (GlcNAc...) asparagine) is linked at Asn1085. The segment at 1190–1409 (CHACFGDWDR…LSLTDINELV (220 aa)) is domain II. Residues Asn1249, Asn1308, and Asn1348 are each glycosylated (N-linked (GlcNAc...) asparagine). Positions 1253 to 1319 (ASTAQLVEAT…TLRQLDQHLD (67 aa)) form a coiled coil. A disordered region spans residues 1338–1364 (SQSAEAERRANTSALAVPSPVSNSASA). The span at 1350–1363 (SALAVPSPVSNSAS) shows a compositional bias: low complexity. The interval 1410-1442 (CGAPGDAPCATSPCGGAGCRDEDGQPRCGGLSC) is domain alpha. The domain I stretch occupies residues 1443 to 1798 (NGAAATADLA…LQVQIYNTCQ (356 aa)). The stretch at 1472–1526 (SILSRVAETRRQASEAQQRAQAALDKANASRGQVEQANQELQELIQSVKDFLNQE) forms a coiled coil. An N-linked (GlcNAc...) asparagine glycan is attached at Asn1499. Phosphoserine; by FAM20C is present on Ser1532. Positions 1577–1790 (VGDVRRAEQL…RSVLQAINLQ (214 aa)) form a coiled coil.

Laminin is a complex glycoprotein, consisting of three different polypeptide chains (alpha, beta, gamma), which are bound to each other by disulfide bonds into a cross-shaped molecule comprising one long and three short arms with globules at each end. Beta-2 is a subunit of laminin-3 (laminin-121 or S-laminin), laminin-4 (laminin-221 or S-merosin), laminin-7 (laminin-321 or KS-laminin), laminin-9 (laminin-421), laminin-11 (laminin-521), laminin-14 (laminin-423) and laminin-15 (laminin-523).

The protein resides in the secreted. It is found in the extracellular space. It localises to the extracellular matrix. The protein localises to the basement membrane. Its function is as follows. Binding to cells via a high affinity receptor, laminin is thought to mediate the attachment, migration and organization of cells into tissues during embryonic development by interacting with other extracellular matrix components. The polypeptide is Laminin subunit beta-2 (LAMB2) (Homo sapiens (Human)).